An 879-amino-acid polypeptide reads, in one-letter code: Prostaglandin F2 receptor negative regulator (879 aa).

A signal peptide spans 1 to 21; that stretch reads MGRPAPRPLLLALLSLAVCRG. 2 consecutive Ig-like C2-type domains span residues 22 to 137 and 149 to 263; these read RVVR…DTVQ and PSSR…QEIQ. The Extracellular segment spans residues 22-832; it reads RVVRVPAGTL…MDVLNAFKYP (811 aa). 2 disulfides stabilise this stretch: Cys-43-Cys-119 and Cys-169-Cys-247. N-linked (GlcNAc...) asparagine glycosylation occurs at Asn-44. Positions 89–91 match the Cell attachment site motif; that stretch reads RGD. Position 271 is a phosphothreonine (Thr-271). 4 consecutive Ig-like C2-type domains span residues 276–389, 406–536, 544–662, and 688–813; these read PTAL…WHKV, PEYQ…DVFS, ASED…AWSP, and PTFN…AEIH. A disulfide bridge connects residues Cys-299 and Cys-373. N-linked (GlcNAc...) asparagine glycans are attached at residues Asn-300, Asn-383, and Asn-413. The short motif at 424-427 is the Endoplasmic reticulum retention signal element; that stretch reads PTEL. A disulfide bridge links Cys-429 with Cys-515. 4 N-linked (GlcNAc...) asparagine glycosylation sites follow: Asn-525, Asn-600, Asn-618, and Asn-691. The cysteines at positions 571 and 655 are disulfide-linked. A Cell attachment site motif is present at residues 703 to 705; the sequence is RGD. Residues Cys-711 and Cys-793 are joined by a disulfide bond. A helical transmembrane segment spans residues 833-853; it reads LLIGVGLSTVIGLLSCLIGYC. The Cytoplasmic portion of the chain corresponds to 854 to 879; the sequence is SSHWCCKKEVRETRRERRRLMSMEMD.

In terms of assembly, interacts with CD9 and CD81. Part of a complex composed of CD9, CD81 and IGSF8. Also seems to interact with CD63, CD82 and CD151. As to expression, expressed in myoblasts (at protein level).

The protein localises to the endoplasmic reticulum membrane. The protein resides in the golgi apparatus. Its subcellular location is the trans-Golgi network membrane. Its function is as follows. Inhibits the binding of prostaglandin F2-alpha (PGF2-alpha) to its specific FP receptor, by decreasing the receptor number rather than the affinity constant. Functional coupling with the prostaglandin F2-alpha receptor seems to occur. In myoblasts, associates with tetraspanins CD9 and CD81 to prevent myotube fusion during muscle regeneration. The protein is Prostaglandin F2 receptor negative regulator (Ptgfrn) of Mus musculus (Mouse).